We begin with the raw amino-acid sequence, 200 residues long: Orotate phosphoribosyltransferase (200 aa).

5-phospho-alpha-D-ribose 1-diphosphate is bound by residues Arg-95, Lys-99, His-101, and 121-129 (DDVATTGGS). Orotate contacts are provided by Thr-125 and Arg-153.

This sequence belongs to the purine/pyrimidine phosphoribosyltransferase family. PyrE subfamily. In terms of assembly, homodimer. Requires Mg(2+) as cofactor.

The enzyme catalyses orotidine 5'-phosphate + diphosphate = orotate + 5-phospho-alpha-D-ribose 1-diphosphate. The protein operates within pyrimidine metabolism; UMP biosynthesis via de novo pathway; UMP from orotate: step 1/2. Catalyzes the transfer of a ribosyl phosphate group from 5-phosphoribose 1-diphosphate to orotate, leading to the formation of orotidine monophosphate (OMP). This is Orotate phosphoribosyltransferase from Cenarchaeum symbiosum (strain A).